Consider the following 522-residue polypeptide: Gypsy retrotransposon integrase-like protein 1 (522 aa).

The 158-residue stretch at 135–292 (KVENPWSLVT…TPYFQMFSRN (158 aa)) folds into the Integrase catalytic domain.

In Macaca fascicularis (Crab-eating macaque), this protein is Gypsy retrotransposon integrase-like protein 1 (GIN1).